Consider the following 412-residue polypeptide: DNA polymerase IV 2 (412 aa).

The 186-residue stretch at 7 to 192 (IFLVDMQSFY…LPVGSMFGVG (186 aa)) folds into the UmuC domain. Aspartate 11 and aspartate 107 together coordinate Mg(2+). Glutamate 108 is an active-site residue.

It belongs to the DNA polymerase type-Y family. In terms of assembly, monomer. Requires Mg(2+) as cofactor.

It is found in the cytoplasm. It carries out the reaction DNA(n) + a 2'-deoxyribonucleoside 5'-triphosphate = DNA(n+1) + diphosphate. Functionally, poorly processive, error-prone DNA polymerase involved in untargeted mutagenesis. Copies undamaged DNA at stalled replication forks, which arise in vivo from mismatched or misaligned primer ends. These misaligned primers can be extended by PolIV. Exhibits no 3'-5' exonuclease (proofreading) activity. May be involved in translesion synthesis (TSL), in conjunction with the beta clamp from PolIII. The sequence is that of DNA polymerase IV 2 (dinB2) from Bacillus subtilis (strain 168).